We begin with the raw amino-acid sequence, 294 residues long: BOI-related E3 ubiquitin-protein ligase 1 (294 aa).

A WRD domain region spans residues 168-204 (LQERVKNLYVENQIWRDLAQTNEATANNLRSNLEQVL). Positions 183 to 212 (RDLAQTNEATANNLRSNLEQVLAQVDDLDA) form a coiled coil. Residues 244 to 281 (CKRCGELTASVLVLPCRHLCLCTVCGSSALLRTCPVCD) form an RING-type zinc finger.

As to quaternary structure, interacts with the DELLA proteins GAI, RGA, RGL1, RGL2 and RGL3.

The catalysed reaction is S-ubiquitinyl-[E2 ubiquitin-conjugating enzyme]-L-cysteine + [acceptor protein]-L-lysine = [E2 ubiquitin-conjugating enzyme]-L-cysteine + N(6)-ubiquitinyl-[acceptor protein]-L-lysine.. It functions in the pathway protein degradation; proteasomal ubiquitin-dependent pathway. E3 ubiquitin-protein ligase involved in regulation of abiotic stress responses. Not involved in ubiquitination of MYB108/BOS1. Has no effect on the stability of the DELLA proteins. The sequence is that of BOI-related E3 ubiquitin-protein ligase 1 (BRG1) from Arabidopsis thaliana (Mouse-ear cress).